A 77-amino-acid polypeptide reads, in one-letter code: Conotoxin S6.11 (77 aa).

The signal sequence occupies residues 1-19 (MEKLTILLLVAAVLMSTQA). A propeptide spanning residues 20–50 (LIQGGLDERQKAKSNFFSKRKSNAESWWEGE) is cleaved from the precursor. 3 disulfide bridges follow: Cys51/Cys65, Cys58/Cys69, and Cys64/Cys74.

The protein belongs to the conotoxin O2 superfamily. As to expression, expressed by the venom duct.

It localises to the secreted. This is Conotoxin S6.11 from Conus striatus (Striated cone).